The following is a 100-amino-acid chain: MHLTPREQEKLLIVVAADLARRRQARGLKLNYPEAVAIITAELLEAARDGKSVAEIMSYGTTILTVDDVMDGVANMIHEVQVEATFPDGTKLVTVHDPIR.

The protein belongs to the urease gamma subunit family. Heterotrimer of UreA (gamma), UreB (beta) and UreC (alpha) subunits. Three heterotrimers associate to form the active enzyme.

It localises to the cytoplasm. It carries out the reaction urea + 2 H2O + H(+) = hydrogencarbonate + 2 NH4(+). The protein operates within nitrogen metabolism; urea degradation; CO(2) and NH(3) from urea (urease route): step 1/1. This Herpetosiphon aurantiacus (strain ATCC 23779 / DSM 785 / 114-95) protein is Urease subunit gamma.